We begin with the raw amino-acid sequence, 116 residues long: Ly-6/neurotoxin-like protein 1 (116 aa).

A signal peptide spans 1 to 20 (MTHLLTVFLVALMGLPVAQA). The UPAR/Ly6 domain occupies 21–104 (LECHVCAYNG…GFATPVTLAL (84 aa)). 5 disulfides stabilise this stretch: Cys23-Cys46, Cys26-Cys33, Cys39-Cys64, Cys68-Cys85, and Cys86-Cys91. Residue Asn92 is the site of GPI-anchor amidated asparagine attachment. Positions 93 to 116 (GAGFATPVTLALVPALLATFWSLL) are cleaved as a propeptide — removed in mature form.

Interacts with nAChRs containing alpha-4:beta-2 (CHRNA4:CHRNB2) and alpha-7 (CHRNA7) subunits. Interacts with CHRNA4 probably in the endoplasmic reticulum prior to nAChR pentameric assembly. Interacts with KCNA2/Potassium voltage-gated channel subfamily A member 2. In terms of tissue distribution, expressed in neurons of multiple regions in the CNS, including the cerebral cortex, thalamus, substantia nigra, cerebellum, amygdala and hippocampus. Also expressed in kidney, heart and thymus, but at lower levels than in the brain. Expressed in the primary visual cortex (V1) and the lateral geniculate nucleus (at protein level).

It is found in the cell membrane. It localises to the cell projection. Its subcellular location is the dendrite. The protein resides in the endoplasmic reticulum. Acts in different tissues through interaction to nicotinic acetylcholine receptors (nAChRs). The proposed role as modulator of nAChR activity seems to be dependent on the nAChR subtype and stoichiometry, and to involve an effect on nAChR trafficking and its cell surface expression, and on single channel properties of the nAChR inserted in the plasma membrane. Modulates functional properties of nicotinic acetylcholine receptors (nAChRs) to prevent excessive excitation, and hence neurodegeneration. Enhances desensitization by increasing both the rate and extent of desensitization of alpha-4:beta-2-containing nAChRs and slowing recovery from desensitization. Promotes large amplitude ACh-evoked currents through alpha-4:beta-2 nAChRs. Is involved in regulation of the nAChR pentameric assembly in the endoplasmic reticulum. Shifts stoichiometry from high sensitivity alpha-4(2):beta-2(3) to low sensitivity alpha-4(3):beta-2(2) nAChR. In vitro modulates alpha-3:beta-4-containing nAChRs. Reduces cell surface expression of (alpha-3:beta-4)(2):beta-4 and (alpha-3:beta-4)(2):alpha-5 nAChRs suggesting an interaction with nAChR alpha-3(-):(+)beta-4 subunit interfaces and an allosteric mode. Corresponding single channel effects characterized by decreased unitary conductance, altered burst proportions and enhanced desensitization/inactivation seem to depend on nAChR alpha:alpha subunit interfaces and are greater in (alpha-3:beta-2)(2):alpha-3 when compared to (alpha-3:beta-2)(2):alpha-5 nAChRs. Prevents plasticity in the primary visual cortex late in life. This is Ly-6/neurotoxin-like protein 1 from Mus musculus (Mouse).